We begin with the raw amino-acid sequence, 372 residues long: Pristinol synthase (372 aa).

Basic and acidic residues predominate over residues 1–12; it reads MAHETTSGRRLP. Positions 1–23 are disordered; it reads MAHETTSGRRLPDPTSPSDPTRR. Asp100 and Asp104 together coordinate Mg(2+). Positions 100-104 match the DDXXD motif motif; sequence DDQFD. Arg197 contacts substrate. Positions 243 and 247 each coordinate Mg(2+). A substrate-binding site is contributed by Lys250. Glu251 is a Mg(2+) binding site. 337-338 is a substrate binding site; the sequence is RY. The tract at residues 349 to 372 is disordered; that stretch reads GRRRPWDGLTTATGTASPRHPRRA.

This sequence belongs to the terpene synthase family. Requires Mg(2+) as cofactor.

The catalysed reaction is (2E,6E)-farnesyl diphosphate + H2O = (+)-(2S,3R,9R)-pristinol + diphosphate. It functions in the pathway secondary metabolite biosynthesis; terpenoid biosynthesis. Catalyzes the conversion of (2E,6E)-farnesyl diphosphate (FPP) to yield a new 5-8 bicyclic (pristinane) sesquiterpenol (+)-(2S,3R,9R)-pristinol via a 1,11-cyclization, which requires the abstraction of the pyrophosphate from FPP to yield the humulyl cation. The only accepted substrate is farnesyl diphosphate (FPP). This is Pristinol synthase from Streptomyces pristinaespiralis (strain ATCC 25486 / DSM 40338 / CBS 914.69 / JCM 4507 / KCC S-0507 / NBRC 13074 / NRRL 2958 / 5647).